A 117-amino-acid chain; its full sequence is MTRAKSGKISKNRHKKILKLAKGYRGRANSCFRVAIEKVEKALQYAYRDRRNRKRDFRGLWIQRINAAVREHGFVYSQFIGALKKAEIDIDRKVLAELAVNNSDGFASIVEKTKAHI.

The protein belongs to the bacterial ribosomal protein bL20 family.

In terms of biological role, binds directly to 23S ribosomal RNA and is necessary for the in vitro assembly process of the 50S ribosomal subunit. It is not involved in the protein synthesizing functions of that subunit. This is Large ribosomal subunit protein bL20 from Rickettsia akari (strain Hartford).